The primary structure comprises 293 residues: RNA pseudouridylate synthase domain-containing protein 1 (293 aa).

Asp-67 is a catalytic residue.

It belongs to the pseudouridine synthase RluA family.

This chain is RNA pseudouridylate synthase domain-containing protein 1 (rpusd1), found in Danio rerio (Zebrafish).